We begin with the raw amino-acid sequence, 293 residues long: DegV domain-containing protein MG326 homolog (293 aa).

Positions Thr-3–Leu-289 constitute a DegV domain. Hexadecanoate is bound by residues Thr-62 and Ser-94.

Functionally, may bind long-chain fatty acids, such as palmitate, and may play a role in lipid transport or fatty acid metabolism. In Mycoplasma pneumoniae (strain ATCC 29342 / M129 / Subtype 1) (Mycoplasmoides pneumoniae), this protein is DegV domain-containing protein MG326 homolog.